Reading from the N-terminus, the 246-residue chain is ABC transporter ATP-binding protein NatA (246 aa).

Residues 2-237 (ITLTDCSRRF…ERSEDLNYIF (236 aa)) enclose the ABC transporter domain. 38-45 (GENGAGKT) is an ATP binding site.

It belongs to the ABC transporter superfamily. The complex is composed of NatA and NatB.

It catalyses the reaction Na(+)(in) + ATP + H2O = Na(+)(out) + ADP + phosphate + H(+). Part of an ABC transporter that catalyzes ATP-dependent electrogenic sodium extrusion. The polypeptide is ABC transporter ATP-binding protein NatA (Bacillus subtilis (strain 168)).